Here is a 75-residue protein sequence, read N- to C-terminus: Small ribosomal subunit protein bS16 (75 aa).

This sequence belongs to the bacterial ribosomal protein bS16 family.

The sequence is that of Small ribosomal subunit protein bS16 from Campylobacter fetus subsp. fetus (strain 82-40).